The primary structure comprises 445 residues: MPCTCGNWRRWIRPLVVLLYIVGLLVVVPLCVWELQKLEVGIHTKAWFIAGIFLLMTIPISLWGILQHLVHYTQPELQKPIIRILWMVPIYSLDSWIALKYPNIAIYVDTCRECYEAYVIYNFMVFLSNYLTNRYPNLVLIIEAKDQQRHLPPLCCCPSWAMGEVLLFRCKLGVLQYTVVRPFTTIIALICELVGVYDEGNFSFDNAWTYLVILNNMSQLFAMYCLVLFYKVLREELNPIQPVGKFLCVKMVVFVSFWQAVLIALLVKVGVISEKHTWEWQSVEAVATGLQDFIICVEMFLAAIAHHYSFSYKPYVQEAEEGSCFDSFLAMWDISDIRADISEQVRNVGRTVLGQPRKMFFAEDHEQNEHTSLLSSSTQDPISDASSMPSSPMGHYQGFGHTVTPLTTPTTVPVVDGIYNTSATRDTEESPELMHNSSEKALDRS.

A run of 7 helical transmembrane segments spans residues 15–35 (LVVLLYIVGLLVVVPLCVWEL), 46–66 (AWFIAGIFLLMTIPISLWGIL), 84–104 (ILWMVPIYSLDSWIALKYPNI), 177–197 (YTVVRPFTTIIALICELVGVY), 210–230 (YLVILNNMSQLFAMYCLVLFY), 252–272 (VVFVSFWQAVLIALLVKVGVI), and 285–305 (AVATGLQDFIICVEMFLAAIA). 2 disordered regions span residues 369-393 (EHTSLLSSSTQDPISDASSMPSSPM) and 421-445 (TSATRDTEESPELMHNSSEKALDRS). Polar residues predominate over residues 370-390 (HTSLLSSSTQDPISDASSMPS).

It belongs to the TMEM184 family.

Its subcellular location is the membrane. May play a role in cell growth. The protein is Transmembrane protein 184C (TMEM184C) of Gallus gallus (Chicken).